The sequence spans 428 residues: Dihydroorotase (428 aa).

Zn(2+) contacts are provided by His59 and His61. Substrate is bound by residues 61 to 63 (HLR) and Asn93. Zn(2+) is bound by residues Asp151, His178, and His231. Residue Asn277 coordinates substrate. Zn(2+) is bound at residue Asp304. Residue Asp304 is part of the active site. Substrate contacts are provided by residues His308 and 322–323 (FG).

The protein belongs to the metallo-dependent hydrolases superfamily. DHOase family. Class I DHOase subfamily. Requires Zn(2+) as cofactor.

It carries out the reaction (S)-dihydroorotate + H2O = N-carbamoyl-L-aspartate + H(+). It functions in the pathway pyrimidine metabolism; UMP biosynthesis via de novo pathway; (S)-dihydroorotate from bicarbonate: step 3/3. Catalyzes the reversible cyclization of carbamoyl aspartate to dihydroorotate. The protein is Dihydroorotase of Bacillus cereus (strain ATCC 10987 / NRS 248).